The following is a 307-amino-acid chain: Mitochondrial glycine transporter (307 aa).

Solcar repeat units follow at residues 8 to 87 (PRNS…MRSS), 115 to 199 (LTMY…SKQL), and 221 to 305 (TSTT…LVKR). Transmembrane regions (helical) follow at residues 14-39 (LIGG…TRIQ), 62-88 (GTLP…RSSL), 121-146 (LLTG…VRYE), 174-197 (GFGA…EKSK), 225-251 (VNTT…KTRM), and 280-298 (GLSM…AWGI).

The protein belongs to the mitochondrial carrier (TC 2.A.29) family. SLC25A38 subfamily.

The protein resides in the mitochondrion inner membrane. It catalyses the reaction glycine(in) = glycine(out). In terms of biological role, mitochondrial glycine transporter that imports glycine into the mitochondrial matrix. Plays an important role in providing glycine for the first enzymatic step in heme biosynthesis, the condensation of glycine with succinyl-CoA to produce 5-aminolevulinate (ALA) in the mitochondrial matrix. The polypeptide is Mitochondrial glycine transporter (Saccharomyces cerevisiae (strain RM11-1a) (Baker's yeast)).